A 397-amino-acid polypeptide reads, in one-letter code: Acetate kinase (397 aa).

Asn8 contributes to the Mg(2+) binding site. Lys15 is a binding site for ATP. Arg89 contacts substrate. Asp146 (proton donor/acceptor) is an active-site residue. Residues 206–210, 281–283, and 329–333 each bind ATP; these read HLGNG, DLR, and GVGEN. Glu382 serves as a coordination point for Mg(2+).

This sequence belongs to the acetokinase family. In terms of assembly, homodimer. The cofactor is Mg(2+). It depends on Mn(2+) as a cofactor.

It is found in the cytoplasm. It catalyses the reaction acetate + ATP = acetyl phosphate + ADP. Its pathway is metabolic intermediate biosynthesis; acetyl-CoA biosynthesis; acetyl-CoA from acetate: step 1/2. Functionally, catalyzes the formation of acetyl phosphate from acetate and ATP. Can also catalyze the reverse reaction. The chain is Acetate kinase from Bacillus mycoides (strain KBAB4) (Bacillus weihenstephanensis).